Here is a 598-residue protein sequence, read N- to C-terminus: UvrABC system protein C (598 aa).

A GIY-YIG domain is found at 13 to 92 (SSPGVYLMKD…IKKYQPRYNV (80 aa)). The 36-residue stretch at 206-241 (DTTIANLEEAIKKASQEHKFEHAAALYRTLTLIRQT) folds into the UVR domain.

It belongs to the UvrC family. As to quaternary structure, interacts with UvrB in an incision complex.

It is found in the cytoplasm. The UvrABC repair system catalyzes the recognition and processing of DNA lesions. UvrC both incises the 5' and 3' sides of the lesion. The N-terminal half is responsible for the 3' incision and the C-terminal half is responsible for the 5' incision. This is UvrABC system protein C from Chlamydia muridarum (strain MoPn / Nigg).